A 207-amino-acid chain; its full sequence is Large ribosomal subunit protein uL4 (207 aa).

A disordered region spans residues 49-78 (HAVKNRSAVSGGGRKPWRQKGTGRARQGSI).

This sequence belongs to the universal ribosomal protein uL4 family. Part of the 50S ribosomal subunit.

In terms of biological role, one of the primary rRNA binding proteins, this protein initially binds near the 5'-end of the 23S rRNA. It is important during the early stages of 50S assembly. It makes multiple contacts with different domains of the 23S rRNA in the assembled 50S subunit and ribosome. Forms part of the polypeptide exit tunnel. The protein is Large ribosomal subunit protein uL4 of Streptococcus sanguinis (strain SK36).